We begin with the raw amino-acid sequence, 268 residues long: Phosphatidylglycerol--prolipoprotein diacylglyceryl transferase (268 aa).

Transmembrane regions (helical) follow at residues 16-36 (FITLRWYGLLIAVAVFIGIWL), 56-76 (IWLVVAAIPAARLYYVAFNWG), and 92-112 (GIAIHGAILGGIVAMAIFTYV). Position 136 (arginine 136) interacts with a 1,2-diacyl-sn-glycero-3-phospho-(1'-sn-glycerol). Transmembrane regions (helical) follow at residues 175–195 (PTFLYESLWNVGVFLLLLWLF), 204–224 (GTLLMVYAIAYSLGRFWIEGL), and 236–256 (IAQVVSLVAIALGSWGLFRLY).

This sequence belongs to the Lgt family.

It is found in the cell inner membrane. It carries out the reaction L-cysteinyl-[prolipoprotein] + a 1,2-diacyl-sn-glycero-3-phospho-(1'-sn-glycerol) = an S-1,2-diacyl-sn-glyceryl-L-cysteinyl-[prolipoprotein] + sn-glycerol 1-phosphate + H(+). It functions in the pathway protein modification; lipoprotein biosynthesis (diacylglyceryl transfer). Functionally, catalyzes the transfer of the diacylglyceryl group from phosphatidylglycerol to the sulfhydryl group of the N-terminal cysteine of a prolipoprotein, the first step in the formation of mature lipoproteins. The sequence is that of Phosphatidylglycerol--prolipoprotein diacylglyceryl transferase from Thermosynechococcus vestitus (strain NIES-2133 / IAM M-273 / BP-1).